Here is a 310-residue protein sequence, read N- to C-terminus: Pyrimidine-specific ribonucleoside hydrolase RihA (310 aa).

Histidine 240 is an active-site residue.

This sequence belongs to the IUNH family. RihA subfamily.

Functionally, hydrolyzes cytidine or uridine to ribose and cytosine or uracil, respectively. This Photobacterium profundum (strain SS9) protein is Pyrimidine-specific ribonucleoside hydrolase RihA.